A 192-amino-acid polypeptide reads, in one-letter code: Putative manganese efflux pump MntP (192 aa).

Transmembrane regions (helical) follow at residues 3–23, 36–56, 65–85, 112–132, 136–156, and 171–191; these read FSAI…VAAA, VLLV…IGWL, VQAW…GKML, FVLA…LPML, FAIS…AGLF, and LAGG…HLVL.

Belongs to the MntP (TC 9.B.29) family.

It localises to the cell inner membrane. Its function is as follows. Probably functions as a manganese efflux pump. The sequence is that of Putative manganese efflux pump MntP from Sorangium cellulosum (strain So ce56) (Polyangium cellulosum (strain So ce56)).